Here is a 299-residue protein sequence, read N- to C-terminus: Probable lipid kinase YegS-like (299 aa).

The DAGKc domain occupies 1–129; it reads MSERKALLIL…IDLGEVGGQM (129 aa). ATP is bound by residues threonine 39, 65–71, and threonine 92; that span reads GDGTLRD. Mg(2+) contacts are provided by leucine 210, aspartate 213, and leucine 215. Glutamate 268 (proton acceptor) is an active-site residue.

It belongs to the diacylglycerol/lipid kinase family. YegS lipid kinase subfamily. It depends on Mg(2+) as a cofactor. Requires Ca(2+) as cofactor.

The protein localises to the cytoplasm. Its function is as follows. Probably phosphorylates lipids; the in vivo substrate is unknown. The chain is Probable lipid kinase YegS-like from Pseudomonas fluorescens (strain ATCC BAA-477 / NRRL B-23932 / Pf-5).